A 286-amino-acid polypeptide reads, in one-letter code: Release factor glutamine methyltransferase (286 aa).

S-adenosyl-L-methionine-binding residues include aspartate 136 and asparagine 179. Substrate is bound at residue 179 to 182; the sequence is NPPY.

Belongs to the protein N5-glutamine methyltransferase family. PrmC subfamily.

The enzyme catalyses L-glutaminyl-[peptide chain release factor] + S-adenosyl-L-methionine = N(5)-methyl-L-glutaminyl-[peptide chain release factor] + S-adenosyl-L-homocysteine + H(+). Functionally, methylates the class 1 translation termination release factors RF1/PrfA and RF2/PrfB on the glutamine residue of the universally conserved GGQ motif. The protein is Release factor glutamine methyltransferase of Borreliella burgdorferi (strain ATCC 35210 / DSM 4680 / CIP 102532 / B31) (Borrelia burgdorferi).